The following is a 672-amino-acid chain: Outer dynein arm-docking complex subunit 4 (672 aa).

8 TPR repeats span residues F13–D46, N48–F80, C81–R114, L275–E311, G320–Y353, S360–T393, T397–E430, and L437–V470. Residues R527–D544 are compositionally biased toward basic and acidic residues. A disordered region spans residues R527 to E672. The segment covering E545–F555 has biased composition (acidic residues). Composition is skewed to basic and acidic residues over residues E595–G650 and G658–E672.

Component of the outer dynein arm-docking complex along with ODAD1, ODAD2 and ODAD3. Interacts with ODAD1; this interaction may facilitate the recruitment and/or attachment of outer dynein arm docking complex proteins, including ODAD1, ODAD3 and ODAD2, to ciliary axonemes. Interacts with components of the IFT complex A, including IFT140, TTC21B/IFT139 and WDR19/IFT144, and the IFT complex B, including IFT46, IFT52 and IFT57. Interacts with CFAP53. In terms of tissue distribution, expressed in the nasal mucosa (at protein level).

The protein localises to the cytoplasm. It localises to the cytoskeleton. The protein resides in the cilium axoneme. In terms of biological role, component of the outer dynein arm-docking complex (ODA-DC) that mediates outer dynein arms (ODA) binding onto the doublet microtubule. Plays an essential role for the assembly of ODA-DC and for the docking of ODA in ciliary axoneme. The chain is Outer dynein arm-docking complex subunit 4 from Homo sapiens (Human).